The chain runs to 226 residues: MYAFLTGPMLWASLLVFFGGLLARVIWYIRGLDWRLDRVAYKPHLAIGLQGAVQSALKWLVPFGTYSWRQQPFFTVAFFLFHIGAVLVPLFLAGHNVILEERFGFSLPALPMGVADTLTVLAIIGLVMIALRRIALTEVRILTTGYDWFILAVSAAPFVTGFLARLHVGDYDTWLLAHIITGELFLIVAPFTKLSHIVLFFMSRGQLGMDYAIKRGGATRGPAFPW.

A run of 6 helical transmembrane segments spans residues 1–23 (MYAF…GLLA), 46–57 (AIGLQGAVQSAL), 73–99 (FFTV…NVIL), 112–131 (MGVA…MIAL), 141–164 (ILTT…GFLA), and 194–222 (LSHI…TRGP).

Heme b serves as cofactor.

The protein localises to the cell membrane. In terms of biological role, HMWC (high-molecular-weight cytochrome c), ORF2, ORF3, ORF4, ORF5 and ORF6 in the HMC operon form a transmembrane protein complex that allows electron flow from the periplasmic hydrogenase to the cytoplasmic enzymes that catalyze reduction of sulfates. This chain is Protein DVU_0532, found in Nitratidesulfovibrio vulgaris (strain ATCC 29579 / DSM 644 / CCUG 34227 / NCIMB 8303 / VKM B-1760 / Hildenborough) (Desulfovibrio vulgaris).